Reading from the N-terminus, the 460-residue chain is Angiopoietin-related protein 3 (460 aa).

The first 16 residues, 1-16, serve as a signal peptide directing secretion; that stretch reads MFTIKLLLFIVPLVIS. The interval 17–165 is sufficient to inhibit LPL lipase activity; that stretch reads SRIDQDNSSF…PEHPEVTSLK (149 aa). Residues 17–207 are sufficient to inhibit LIPG/EL phospholipase activity; it reads SRIDQDNSSF…EIENQLRRTS (191 aa). The required for inhibition of LPL lipase activity stretch occupies residues 32–56; the sequence is EPKSRFAMLDDVKILANGLLQLGHG. The stretch at 85–210 forms a coiled coil; the sequence is LSLQTSEIKE…NQLRRTSIQE (126 aa). Asn115 carries an N-linked (GlcNAc...) asparagine glycan. O-linked (GalNAc) threonine glycosylation occurs at Thr226. Positions 237–455 constitute a Fibrinogen C-terminal domain; that stretch reads VKHDGIPAEC…STKMLIHPTD (219 aa). Cys246 and Cys274 form a disulfide bridge. N-linked (GlcNAc...) asparagine glycans are attached at residues Asn296 and Asn357. The cysteines at positions 394 and 408 are disulfide-linked.

In terms of assembly, interacts with ANGPTL8. Interacts with ITGB3. O-glycosylated at Thr-226 by GALNT2; blocks processing and activation by proprotein convertases. Post-translationally, in part proteolytically cleaved by proprotein convertases; proposed to be involved in activation. As to expression, expressed principally in liver. Weakly expressed in kidney. Binds to adipocytes. Increased expression and colocalization with activated ITGB3 in glomeruli of patients with nephrotic syndrome showing effaced podocyte foot processes (at protein level).

Its subcellular location is the secreted. The protein localises to the cell projection. The protein resides in the lamellipodium. Acts in part as a hepatokine that is involved in regulation of lipid and glucose metabolism. Proposed to play a role in the trafficking of energy substrates to either storage or oxidative tissues in response to food intake. Has a stimulatory effect on plasma triglycerides (TG), which is achieved by suppressing plasma TG clearance via inhibition of LPL activity. The inhibition of LPL activity appears to be an indirect mechanism involving recruitment of proprotein convertases PCSK6 and FURIN to LPL leading to cleavage and dissociation of LPL from the cell surface; the function does not require ANGPTL3 proteolytic cleavage but seems to be mediated by the N-terminal domain, and is not inhibited by GPIHBP1. Can inhibit endothelial lipase, causing increased plasma levels of high density lipoprotein (HDL) cholesterol and phospholipids. Can bind to adipocytes to activate lipolysis, releasing free fatty acids and glycerol. Suppresses LPL specifically in oxidative tissues which is required to route very low density lipoprotein (VLDL)-TG to white adipose tissue (WAT) for storage in response to food; the function may involve cooperation with circulating, liver-derived ANGPTL8 and ANGPTL4 expression in WAT. Contributes to lower plasma levels of low density lipoprotein (LDL)-cholesterol by a mechanism that is independent of the canonical pathway implicating APOE and LDLR. May stimulate hypothalamic LPL activity. In terms of biological role, in vitro inhibits LPL activity; not effective on GPIHBP1-stabilized LPL. Functionally, involved in angiogenesis. Binds to endothelial cells via integrin alpha-V/beta-3 (ITGAV:ITGB3), activates FAK, MAPK and Akt signaling pathways and induces cell adhesion and cell migration. Secreted from podocytes, may modulate properties of glomerular endothelial cells involving integrin alpha-V/beta-3 and Akt signaling. May increase the motility of podocytes. May induce actin filament rearrangements in podocytes implicating integrin alpha-V/beta-3 and Rac1 activation. Binds to hematopoietic stem cells (HSC) and is involved in the regulation of HSC activity probably implicating down-regulation of IKZF1/IKAROS. In Homo sapiens (Human), this protein is Angiopoietin-related protein 3 (ANGPTL3).